Consider the following 302-residue polypeptide: 4-diphosphocytidyl-2-C-methyl-D-erythritol kinase (302 aa).

Lys-20 is an active-site residue. Residue Pro-106–Gly-116 participates in ATP binding. The active site involves Asp-148.

The protein belongs to the GHMP kinase family. IspE subfamily.

The catalysed reaction is 4-CDP-2-C-methyl-D-erythritol + ATP = 4-CDP-2-C-methyl-D-erythritol 2-phosphate + ADP + H(+). It functions in the pathway isoprenoid biosynthesis; isopentenyl diphosphate biosynthesis via DXP pathway; isopentenyl diphosphate from 1-deoxy-D-xylulose 5-phosphate: step 3/6. In terms of biological role, catalyzes the phosphorylation of the position 2 hydroxy group of 4-diphosphocytidyl-2C-methyl-D-erythritol. This is 4-diphosphocytidyl-2-C-methyl-D-erythritol kinase from Bartonella henselae (strain ATCC 49882 / DSM 28221 / CCUG 30454 / Houston 1) (Rochalimaea henselae).